A 713-amino-acid polypeptide reads, in one-letter code: Transcription activator of gluconeogenesis CPC735_053490 (713 aa).

A disordered region spans residues M1–R70. Polar residues predominate over residues G19–P56. A DNA-binding region (zn(2)-C6 fungal-type) is located at residues C77 to C105. Polar residues predominate over residues P145–P159. 4 disordered regions span residues P145 to Q229, G274 to D318, G541 to I564, and G623 to W665. The span at Q160 to N171 shows a compositional bias: low complexity. A compositionally biased stretch (polar residues) spans F191–N212. Residues Q213–Q229 are compositionally biased toward low complexity. Composition is skewed to polar residues over residues S295–P312, G541–P558, and G649–L659.

The protein belongs to the ERT1/acuK family.

Its subcellular location is the nucleus. In terms of biological role, transcription factor which regulates nonfermentable carbon utilization. Activator of gluconeogenetic genes. This chain is Transcription activator of gluconeogenesis CPC735_053490, found in Coccidioides posadasii (strain C735) (Valley fever fungus).